The following is a 351-amino-acid chain: UDP-3-O-acylglucosamine N-acyltransferase (351 aa).

His-240 acts as the Proton acceptor in catalysis.

Belongs to the transferase hexapeptide repeat family. LpxD subfamily. Homotrimer.

The catalysed reaction is a UDP-3-O-[(3R)-3-hydroxyacyl]-alpha-D-glucosamine + a (3R)-hydroxyacyl-[ACP] = a UDP-2-N,3-O-bis[(3R)-3-hydroxyacyl]-alpha-D-glucosamine + holo-[ACP] + H(+). The protein operates within bacterial outer membrane biogenesis; LPS lipid A biosynthesis. Catalyzes the N-acylation of UDP-3-O-acylglucosamine using 3-hydroxyacyl-ACP as the acyl donor. Is involved in the biosynthesis of lipid A, a phosphorylated glycolipid that anchors the lipopolysaccharide to the outer membrane of the cell. This Pseudomonas fluorescens (strain SBW25) protein is UDP-3-O-acylglucosamine N-acyltransferase.